Reading from the N-terminus, the 247-residue chain is Cell division protein ZapD (247 aa).

Belongs to the ZapD family. Interacts with FtsZ.

Its subcellular location is the cytoplasm. Functionally, cell division factor that enhances FtsZ-ring assembly. Directly interacts with FtsZ and promotes bundling of FtsZ protofilaments, with a reduction in FtsZ GTPase activity. In Escherichia coli O139:H28 (strain E24377A / ETEC), this protein is Cell division protein ZapD.